The chain runs to 557 residues: Isocitrate lyase (557 aa).

Phosphothreonine is present on threonine 53. 106–108 (SGW) contacts substrate. Aspartate 179 provides a ligand contact to Mg(2+). The active-site Proton acceptor is the cysteine 217. Substrate-binding positions include 218 to 219 (GH), arginine 254, 437 to 441 (NLSPS), and threonine 471.

The protein belongs to the isocitrate lyase/PEP mutase superfamily. Isocitrate lyase family. As to quaternary structure, homotetramer. The cofactor is Mg(2+). In terms of processing, phosphorylated in response to elevated glucose levels, leading first to reversible inactivation of the enzyme (short-term inactivation), and at a later stage to proteolytic degradation of the protein (long-term inactivation).

The protein resides in the cytoplasm. It is found in the secreted. Its subcellular location is the extracellular space. It localises to the extracellular matrix. The protein localises to the vacuole. It carries out the reaction D-threo-isocitrate = glyoxylate + succinate. The enzyme catalyses (2S,3R)-3-hydroxybutane-1,2,3-tricarboxylate = pyruvate + succinate. Its pathway is carbohydrate metabolism; glyoxylate cycle; (S)-malate from isocitrate: step 1/2. With respect to regulation, phosphorylated and inactivated after addition of glucose to the cell culture (repressing conditions). Catalyzes the formation of succinate and glyoxylate from isocitrate, a key step of the glyoxylate cycle, which operates as an anaplerotic route for replenishing the tricarboxylic acid cycle. Required for growth on ethanol or acetate, but dispensable when fermentable carbon sources are available. Also acts on 2-methylisocitrate. This is Isocitrate lyase from Saccharomyces cerevisiae (strain ATCC 204508 / S288c) (Baker's yeast).